We begin with the raw amino-acid sequence, 55 residues long: MKFVKAIWPFVAVAIVFMFMSAFKFNDQLTDQEKQKIDMEMNKIQQQEEPVNANK.

Positions 1–25 are cleaved as a signal peptide; that stretch reads MKFVKAIWPFVAVAIVFMFMSAFKF.

This is an uncharacterized protein from Bacillus subtilis (strain 168).